Here is a 380-residue protein sequence, read N- to C-terminus: Palmitoyltransferase ZDHHC18 (380 aa).

Residues 1 to 59 (MKDCEYQQISPGAAPPPASPGARRPGPAAPPAPSPGPAPGAPRWSGSGSGSGSLGRRPR) form a disordered region. Topologically, residues 1–82 (MKDCEYQQIS…CGGRLMLAGH (82 aa)) are cytoplasmic. A Phosphoserine modification is found at S19. Residues 27-40 (PAAPPAPSPGPAPG) show a composition bias toward pro residues. Residues 83–103 (GGVFALTLLLILSTTILFFVF) form a helical membrane-spanning segment. Residues 104–111 (DCPYLART) are Lumenal-facing. Residues 112–132 (LTLAIPIIAAILFFFVMSCLL) traverse the membrane as a helical segment. Over 133–227 (QTSFTDPGIL…GNCVGRRNYR (95 aa)) the chain is Cytoplasmic. A DHHC domain is found at 184–234 (KYCFTCKMFRPPRTSHCSVCDNCVERFDHHCPWVGNCVGRRNYRFFYAFIL). The active-site S-palmitoyl cysteine intermediate is the C214. Residues 228–248 (FFYAFILSLSFLTAFIFACVV) traverse the membrane as a helical segment. Residues 249 to 269 (THLTLLSQGSNFLSALKKTPA) lie on the Lumenal side of the membrane. A helical membrane pass occupies residues 270–290 (SVLELVICFFSIWSILGLSGF). At 291-380 (HTYLVASNLT…PDASMVGGHP (90 aa)) the chain is on the cytoplasmic side. Residues 355–380 (ALPSPIRSDDPACGAKPDASMVGGHP) are disordered.

This sequence belongs to the DHHC palmitoyltransferase family. ERF2/ZDHHC9 subfamily. Ubiquitously expressed.

Its subcellular location is the golgi apparatus membrane. It catalyses the reaction L-cysteinyl-[protein] + hexadecanoyl-CoA = S-hexadecanoyl-L-cysteinyl-[protein] + CoA. Its function is as follows. Palmitoyltransferase that catalyzes the addition of palmitate onto various protein substrates, such as CGAS, HRAS and LCK. Palmitoylates HRAS and LCK. Acts as a negative regulator of the cGAS-STING pathway be mediating palmitoylation and inactivation of CGAS. May also have a palmitoyltransferase activity toward the beta-2 adrenergic receptor/ADRB2 and therefore regulate G protein-coupled receptor signaling. This chain is Palmitoyltransferase ZDHHC18, found in Mus musculus (Mouse).